The sequence spans 532 residues: MLLQAFLFLLAGFAAKISASMTNETSDRPLVHFTPNKGWMNDPNGLWYDEKDAKWHLYFQYNPNDTVWGTPLFWGHATSDDLTNWEDQPIAIAPKRNDSGAFSGSMVVDYNNTSGFFNDTIDPRQRCVAIWTYNTPESEEQYISYSLDGGYTFTEYQKNPVLAANSTQFRDPKVFWYEPSQKWIMTAAKSQDYKIEIYSSDDLKSWKLESAFANEGFLGYQYECPGLIEVPTEQDPSKSYWVMFISINPGAPAGGSFNQYFVGSFNGTHFEAFDNQSRVVDFGKDYYALQTFFNTDPTYGSALGIAWASNWEYSAFVPTNPWRSSMSLVRKFSLNTEYQANPETELINLKAEPILNISNAGPWSRFATNTTLTKANSYNVDLSNSTGTLEFELVYAVNTTQTISKSVFADLSLWFKGLEDPEEYLRMGFEVSASSFFLDRGNSKVKFVKENPYFTNRMSVNNQPFKSENDLSYYKVYGLLDQNILELYFNDGDVVSTNTYFMTTGNALGSVNMTTGVDNLFYIDKFQVREVK.

The signal sequence occupies residues Met-1–Ala-19. Asn-23 is a glycosylation site (N-linked (GlcNAc...) asparagine). Substrate is bound by residues Trp-39–Asp-42 and Gln-60. Asp-42 is an active-site residue. N-linked (GlcNAc...) asparagine; partial glycosylation is present at Asn-64. A glycan (N-linked (GlcNAc...) asparagine) is linked at Asn-97. Residue Phe-102–Ser-103 participates in substrate binding. Residues Asn-111 and Asn-118 are each glycosylated (N-linked (GlcNAc...) asparagine). An N-linked (GlcNAc...) asparagine; partial glycan is attached at Asn-165. Substrate contacts are provided by residues Arg-170–Asp-171 and Glu-223. 2 N-linked (GlcNAc...) asparagine; partial glycosylation sites follow: Asn-266 and Asn-275. Trp-311 contributes to the substrate binding site. Asn-356, Asn-369, Asn-384, and Asn-398 each carry an N-linked (GlcNAc...) asparagine glycan. Asn-512 carries N-linked (GlcNAc...) asparagine; partial glycosylation.

This sequence belongs to the glycosyl hydrolase 32 family. Post-translationally, isoform Secreted is glycosylated. Isoform Intracellular is not glycosylated.

Its subcellular location is the cytoplasm. It localises to the secreted. It catalyses the reaction Hydrolysis of terminal non-reducing beta-D-fructofuranoside residues in beta-D-fructofuranosides.. This chain is Invertase 2 (SUC2), found in Saccharomyces cerevisiae (strain ATCC 204508 / S288c) (Baker's yeast).